A 403-amino-acid polypeptide reads, in one-letter code: Phosphoglycerate kinase (403 aa).

Substrate contacts are provided by residues 21–23, Arg-36, 59–62, Arg-119, and Arg-159; these read DFN and HLGR. ATP contacts are provided by residues Lys-214, Gly-301, Glu-332, and 359–362; that span reads GGDS.

This sequence belongs to the phosphoglycerate kinase family. Monomer.

Its subcellular location is the cytoplasm. The catalysed reaction is (2R)-3-phosphoglycerate + ATP = (2R)-3-phospho-glyceroyl phosphate + ADP. Its pathway is carbohydrate degradation; glycolysis; pyruvate from D-glyceraldehyde 3-phosphate: step 2/5. This is Phosphoglycerate kinase from Lactobacillus acidophilus (strain ATCC 700396 / NCK56 / N2 / NCFM).